The following is a 1212-amino-acid chain: DNA-directed RNA polymerase subunit beta' (1212 aa).

Zn(2+) is bound by residues Cys60, Cys62, Cys75, and Cys78. 3 residues coordinate Mg(2+): Asp450, Asp452, and Asp454. The Zn(2+) site is built by Cys819, Cys893, Cys900, and Cys903.

The protein belongs to the RNA polymerase beta' chain family. The RNAP catalytic core consists of 2 alpha, 1 beta, 1 beta' and 1 omega subunit. When a sigma factor is associated with the core the holoenzyme is formed, which can initiate transcription. It depends on Mg(2+) as a cofactor. The cofactor is Zn(2+).

It catalyses the reaction RNA(n) + a ribonucleoside 5'-triphosphate = RNA(n+1) + diphosphate. Its function is as follows. DNA-dependent RNA polymerase catalyzes the transcription of DNA into RNA using the four ribonucleoside triphosphates as substrates. This Streptococcus thermophilus (strain ATCC BAA-491 / LMD-9) protein is DNA-directed RNA polymerase subunit beta'.